We begin with the raw amino-acid sequence, 386 residues long: CUE domain-containing protein 1 (386 aa).

Residues 1–10 show a composition bias toward low complexity; sequence MTSLFRRSSS. The tract at residues 1 to 40 is disordered; it reads MTSLFRRSSSGSGGGGTAGARGGGGGTAAPQELNNSRPAR. Gly residues predominate over residues 11 to 27; sequence GSGGGGTAGARGGGGGT. The 44-residue stretch at 46-89 folds into the CUE domain; sequence EFNQAMDDFKTMFPNMDYDIIECVLRANSGAVDATIDQLLQMNL. 3 disordered regions span residues 147–172, 195–225, and 367–386; these read LAPPTPPPRIDALGSGAPTSQRRYRN, SIQGNAGGPKPGSGEGCPPAMAGPGPGDQES, and DFRGRRQEAPKVEEGLREGQ. Gly residues predominate over residues 199 to 209; it reads NAGGPKPGSGE.

This is CUE domain-containing protein 1 (CUEDC1) from Homo sapiens (Human).